The sequence spans 708 residues: Elongation factor G 1 (708 aa).

Residues 9 to 295 enclose the tr-type G domain; the sequence is AKVRNIGIMA…AVVRYLPTPL (287 aa). GTP is bound by residues 18-25, 86-90, and 140-143; these read AHIDAGKT, DTPGH, and NKLD.

It belongs to the TRAFAC class translation factor GTPase superfamily. Classic translation factor GTPase family. EF-G/EF-2 subfamily.

The protein localises to the cytoplasm. In terms of biological role, catalyzes the GTP-dependent ribosomal translocation step during translation elongation. During this step, the ribosome changes from the pre-translocational (PRE) to the post-translocational (POST) state as the newly formed A-site-bound peptidyl-tRNA and P-site-bound deacylated tRNA move to the P and E sites, respectively. Catalyzes the coordinated movement of the two tRNA molecules, the mRNA and conformational changes in the ribosome. This is Elongation factor G 1 (fusA) from Streptomyces coelicolor (strain ATCC BAA-471 / A3(2) / M145).